Here is a 533-residue protein sequence, read N- to C-terminus: Beta-1,4-mannosyl-glycoprotein 4-beta-N-acetylglucosaminyltransferase (533 aa).

Residues Met1–Lys7 are Cytoplasmic-facing. A helical; Signal-anchor for type II membrane protein membrane pass occupies residues Leu8–Leu23. Residues His24–Val533 lie on the Lumenal side of the membrane. The disordered stretch occupies residues Lys119–Arg158. Asn141, Asn241, Asn259, and Asn397 each carry an N-linked (GlcNAc...) asparagine glycan. Positions Ser507 to Val533 are disordered.

This sequence belongs to the glycosyltransferase 17 family. As to quaternary structure, interacts with MGAT4D.

The protein localises to the golgi apparatus membrane. It catalyses the reaction N(4)-{beta-D-GlcNAc-(1-&gt;2)-alpha-D-Man-(1-&gt;3)-[beta-D-GlcNAc-(1-&gt;2)-alpha-D-Man-(1-&gt;6)]-beta-D-Man-(1-&gt;4)-beta-D-GlcNAc-(1-&gt;4)-beta-D-GlcNAc}-L-asparaginyl-[protein] + UDP-N-acetyl-alpha-D-glucosamine = N(4)-{beta-D-GlcNAc-(1-&gt;2)-alpha-D-Man-(1-&gt;3)-[beta-D-GlcNAc-(1-&gt;4)]-[beta-D-GlcNAc-(1-&gt;2)-alpha-D-Man-(1-&gt;6)]-beta-D-Man-(1-&gt;4)-beta-D-GlcNAc-(1-&gt;4)-beta-D-GlcNAc}-L-asparaginyl-[protein] + UDP + H(+). Its pathway is protein modification; protein glycosylation. In terms of biological role, it is involved in the regulation of the biosynthesis and biological function of glycoprotein oligosaccharides. Catalyzes the addition of N-acetylglucosamine in beta 1-4 linkage to the beta-linked mannose of the trimannosyl core of N-linked sugar chains, called bisecting N-acetylglucosamine (GlcNAc). It is one of the most important enzymes involved in the regulation of the biosynthesis of glycoprotein oligosaccharides. The addition of this bisecting GlcNAc residue alters not only the composition, but also the conformation of the N-glycan. The introduction of the bisecting GlcNAc residue results in the suppression of further processing and elongation of N-glycans, precluding the formation of beta-1,6 GlcNAc branching, catalyzed by MGAT5 since it is unable to use the bisected oligosaccharide as a substrate. Addition of bisecting N-acetylglucosamine to CDH1/E-cadherin modulates CDH1 cell membrane location. Inhibits NeuAc-alpha-2,3-Gal-beta-1,4-GlcNAc- formation which modulates sialylation levels and plays a role in cell migration regulation. In brain, addition of bisecting N-acetylglucosamine to BACE1 blocks its lysosomal targeting in response to oxidative stress and further degradation which increases its location to early endosome and the APP cleavage. In Homo sapiens (Human), this protein is Beta-1,4-mannosyl-glycoprotein 4-beta-N-acetylglucosaminyltransferase.